The sequence spans 505 residues: ATP synthase subunit beta (505 aa).

Residue 157 to 164 participates in ATP binding; it reads GGAGVGKT.

Belongs to the ATPase alpha/beta chains family. In terms of assembly, F-type ATPases have 2 components, CF(1) - the catalytic core - and CF(0) - the membrane proton channel. CF(1) has five subunits: alpha(3), beta(3), gamma(1), delta(1), epsilon(1). CF(0) has three main subunits: a(1), b(2) and c(9-12). The alpha and beta chains form an alternating ring which encloses part of the gamma chain. CF(1) is attached to CF(0) by a central stalk formed by the gamma and epsilon chains, while a peripheral stalk is formed by the delta and b chains.

The protein localises to the cell inner membrane. The enzyme catalyses ATP + H2O + 4 H(+)(in) = ADP + phosphate + 5 H(+)(out). Functionally, produces ATP from ADP in the presence of a proton gradient across the membrane. The catalytic sites are hosted primarily by the beta subunits. This is ATP synthase subunit beta from Bacteroides fragilis (strain ATCC 25285 / DSM 2151 / CCUG 4856 / JCM 11019 / LMG 10263 / NCTC 9343 / Onslow / VPI 2553 / EN-2).